A 26-amino-acid polypeptide reads, in one-letter code: Hemocyanin subunit 5 (26 aa).

Belongs to the tyrosinase family. Hemocyanin subfamily. As to expression, hemolymph.

It localises to the secreted. It is found in the extracellular space. Hemocyanins are copper-containing oxygen carriers occurring freely dissolved in the hemolymph of many mollusks and arthropods. This chain is Hemocyanin subunit 5, found in Maja squinado (Mediterranean spider crab).